We begin with the raw amino-acid sequence, 119 residues long: MVKLAFPRELRLLTPSHFTFVFQQPQRAGTPQITILGRLNSLGHPRIGLTVAKKNVRRAHERNRIKRLTRESFRLRQHELPAMDFVVVAKKGVADLDNRALSEALEKLWRRHCRLARGS.

This sequence belongs to the RnpA family. Consists of a catalytic RNA component (M1 or rnpB) and a protein subunit.

The catalysed reaction is Endonucleolytic cleavage of RNA, removing 5'-extranucleotides from tRNA precursor.. Its function is as follows. RNaseP catalyzes the removal of the 5'-leader sequence from pre-tRNA to produce the mature 5'-terminus. It can also cleave other RNA substrates such as 4.5S RNA. The protein component plays an auxiliary but essential role in vivo by binding to the 5'-leader sequence and broadening the substrate specificity of the ribozyme. The protein is Ribonuclease P protein component of Citrobacter koseri (strain ATCC BAA-895 / CDC 4225-83 / SGSC4696).